Here is a 252-residue protein sequence, read N- to C-terminus: Ferritin-2, chloroplastic (252 aa).

A chloroplast-targeting transit peptide spans 1-43 (MMLRVSSSPAAAVANHLSGGAAATTAPARVTAQRSGVSLSAAA). An extension peptide (EP) region spans residues 44–80 (AAGKGKEVLSGVVFQPFEEIKGELALVPQSPDRSLAR). Residues 81–234 (HKFVDDCEAA…KYVAQLRRVG (154 aa)) enclose the Ferritin-like diiron domain. Residues Glu98, Glu133, His136, Glu182, and Gln216 each coordinate Fe cation.

Belongs to the ferritin family. As to quaternary structure, oligomer of 24 subunits. There are two types of subunits: L (light) chain and H (heavy) chain. The major chain can be light or heavy, depending on the species and tissue type. The functional molecule forms a roughly spherical shell with a diameter of 12 nm and contains a central cavity into which the insoluble mineral iron core is deposited. In terms of tissue distribution, ferritins accumulate in seed during maturation. Then, they are degraded during the first days of germination. Present in roots and leaves after iron treatment.

The protein localises to the plastid. It is found in the chloroplast. The enzyme catalyses 4 Fe(2+) + O2 + 4 H(+) = 4 Fe(3+) + 2 H2O. In terms of biological role, stores iron in a soluble, non-toxic, readily available form. Important for iron homeostasis. Has ferroxidase activity. Iron is taken up in the ferrous form and deposited as ferric hydroxides after oxidation. The chain is Ferritin-2, chloroplastic (FER2) from Zea mays (Maize).